The chain runs to 149 residues: UPF0178 protein lwe1471 (149 aa).

Belongs to the UPF0178 family.

This is UPF0178 protein lwe1471 from Listeria welshimeri serovar 6b (strain ATCC 35897 / DSM 20650 / CCUG 15529 / CIP 8149 / NCTC 11857 / SLCC 5334 / V8).